The sequence spans 180 residues: NAD(P)H-quinone oxidoreductase subunit 6, chloroplastic (180 aa).

Transmembrane regions (helical) follow at residues 10–30, 32–52, 57–77, 95–115, and 153–173; these read ILLV…VLLT, IIYS…LYIL, FVAA…IVFA, VGDG…ITII, and FLPF…AITI.

It belongs to the complex I subunit 6 family. NDH is composed of at least 16 different subunits, 5 of which are encoded in the nucleus.

The protein resides in the plastid. It is found in the chloroplast thylakoid membrane. The catalysed reaction is a plastoquinone + NADH + (n+1) H(+)(in) = a plastoquinol + NAD(+) + n H(+)(out). It catalyses the reaction a plastoquinone + NADPH + (n+1) H(+)(in) = a plastoquinol + NADP(+) + n H(+)(out). In terms of biological role, NDH shuttles electrons from NAD(P)H:plastoquinone, via FMN and iron-sulfur (Fe-S) centers, to quinones in the photosynthetic chain and possibly in a chloroplast respiratory chain. The immediate electron acceptor for the enzyme in this species is believed to be plastoquinone. Couples the redox reaction to proton translocation, and thus conserves the redox energy in a proton gradient. In Cycas taitungensis (Prince sago), this protein is NAD(P)H-quinone oxidoreductase subunit 6, chloroplastic (ndhG).